A 180-amino-acid polypeptide reads, in one-letter code: Ribosome maturation factor RimM (180 aa).

One can recognise a PRC barrel domain in the interval Glu99 to Gly172.

Belongs to the RimM family. In terms of assembly, binds ribosomal protein uS19.

It is found in the cytoplasm. An accessory protein needed during the final step in the assembly of 30S ribosomal subunit, possibly for assembly of the head region. Essential for efficient processing of 16S rRNA. May be needed both before and after RbfA during the maturation of 16S rRNA. It has affinity for free ribosomal 30S subunits but not for 70S ribosomes. This is Ribosome maturation factor RimM from Bartonella henselae (strain ATCC 49882 / DSM 28221 / CCUG 30454 / Houston 1) (Rochalimaea henselae).